The chain runs to 461 residues: MRVLIKNGTVVNADGQAKQDLLIESGIVRQLGNNISPQLPYEEIDATGCYVFPGGVDVHTHFNIDVGIARSCDDFFTGTRAAACGGTTTIIDHMGFGPNGCRLRHQLEVYRGYAAHKAVIDYSFHGVIQHINHAILDEIPMMVEEGLSSFKLYLTYQYKLNDDEVLQALRRLHESGALTTVHPENDAAIASKRAEFIAAGLTAPRYHALSRPLECEAEAIARMINLAQIAGNAPLYIVHLSNGLGLDYLRLARANHQPVWVETCPQYLLLDERSYDTEDGMKFILSPPLRNIREQDKLWCGISDGAIDVVATDHCTFSMAQRLQISKGDFSRCPNGLPGVENRMQLLFSSGVMTGRITPERFVELTSAMPARLFGLWPQKGLLAPGSDGDVVIIDPRQSQQIQHRHLHDNADYSPWEGFTCQGAIVRTLSRGETIFCDGTFTGKAGRGRFLRRKPFVPPVL.

A divalent metal cation is bound by residues H59, H61, and K151. K151 carries the N6-carboxylysine modification. Y156 is a substrate binding site. Residues H182 and H239 each contribute to the a divalent metal cation site. S286 serves as a coordination point for substrate. D313 is a binding site for a divalent metal cation. Position 335 (N335) interacts with substrate.

It belongs to the metallo-dependent hydrolases superfamily. Hydantoinase/dihydropyrimidinase family. Homotetramer. The cofactor is a divalent metal cation. Post-translationally, carboxylation allows a single lysine to coordinate two divalent metal cations.

It carries out the reaction D-5-phenylhydantoin + H2O = N-carbamoyl-D-phenylglycine + H(+). Functionally, catalyzes the stereospecific hydrolysis of the cyclic amide bond of D-hydantoin derivatives with an aromatic side chains at the 5'-position. Has no activity on dihydropyrimidines. The physiological function is unknown. The polypeptide is D-phenylhydantoinase (Escherichia coli (strain 55989 / EAEC)).